We begin with the raw amino-acid sequence, 154 residues long: Superoxide dismutase [Cu-Zn] (154 aa).

Residues His47, His49, and His64 each coordinate Cu cation. Cys58 and Cys147 are joined by a disulfide. 4 residues coordinate Zn(2+): His64, His72, His81, and Asp84. His121 serves as a coordination point for Cu cation. The segment covering 126-137 has biased composition (basic and acidic residues); sequence DLGRGGNEESKK. The disordered stretch occupies residues 126 to 147; sequence DLGRGGNEESKKTGNAGPRPAC.

This sequence belongs to the Cu-Zn superoxide dismutase family. Homodimer. Requires Cu cation as cofactor. Zn(2+) serves as cofactor.

The protein resides in the cytoplasm. It catalyses the reaction 2 superoxide + 2 H(+) = H2O2 + O2. In terms of biological role, destroys radicals which are normally produced within the cells and which are toxic to biological systems. Plays an important role in the phase transition, and may be important in vivo, as it would facilitate the intracellular survival of the fungus by providing a non-toxic environment in the macrophage phagolysosomes. The polypeptide is Superoxide dismutase [Cu-Zn] (Talaromyces marneffei (Penicillium marneffei)).